A 700-amino-acid chain; its full sequence is Pentatricopeptide repeat-containing protein 1, mitochondrial (700 aa).

The interval 49–93 (SSSQLPLGQERQENTGSLGSDPSHSNSTATQEEDEEEEESFGTLS) is disordered. The span at 62–78 (NTGSLGSDPSHSNSTAT) shows a compositional bias: polar residues. Acidic residues predominate over residues 79 to 88 (QEEDEEEEES). PPR repeat units follow at residues 135–171 (TPYW…RLQP), 172–206 (MESN…DLEP), 207–245 (SDAT…NFEL), 246–280 (NLKT…GHVV), 281–317 (TEET…GLQP), and 318–354 (SRDS…ATVL). The segment at 393-414 (SQALGPPEPPEARVPGKAQPEV) is disordered. PPR repeat units lie at residues 519-553 (DLTF…GLVP), 554-585 (NLQT…QVTP), and 586-620 (NTHI…RVPV). The interval 672–700 (HPWQKFRTKPQGDQDTGKEADDGCALGGR) is disordered. A compositionally biased stretch (basic and acidic residues) spans 681-692 (PQGDQDTGKEAD).

Belongs to the PTCD1 family. Associates with mitochondrial leucine tRNAs. Interacts with ELAC2. As to expression, abundant in testes, skeletal muscle and heart.

The protein resides in the mitochondrion. The protein localises to the mitochondrion matrix. Its function is as follows. Mitochondrial protein implicated in negative regulation of leucine tRNA levels, as well as negative regulation of mitochondria-encoded proteins and COX activity. Also affects the 3'-processing of mitochondrial tRNAs. This Homo sapiens (Human) protein is Pentatricopeptide repeat-containing protein 1, mitochondrial (PTCD1).